Consider the following 405-residue polypeptide: Envelope glycoprotein M (405 aa).

Topologically, residues 1 to 17 (MKSSKNDTFVYRTWVKT) are intravirion. The helical transmembrane segment at 18 to 38 (LVVYFVMFVMSAVVPITAMFP) threads the bilayer. Over 39–76 (NLGYPCYFNALVDYGALNLTNYNLAHHLTPTLYLEPPE) the chain is Virion surface. The chain crosses the membrane as a helical span at residues 77 to 97 (MFVYITLVFIADCVAFIYYAC). The Intravirion portion of the chain corresponds to 98 to 121 (GEVALIKARKKVSGLTDLSAWVSA). A helical transmembrane segment spans residues 122 to 142 (VGSPTVLFLAILKLWSIQVFI). Residues 143 to 149 (QVLSYKH) lie on the Virion surface side of the membrane. Residues 150–170 (VFLSAFVYFLHFLASVLHACA) form a helical membrane-spanning segment. At 171–192 (CVTRFSPVWVVKAQDNSIPQDT) the chain is on the intravirion side. The helical transmembrane segment at 193–215 (FLWWVVFYLKPVVTNLYLGCLAL) threads the bilayer. Residues 216-245 (ETLVFSLSVFLALGNSFYFMVGDMVLGAVN) lie on the Virion surface side of the membrane. Residues 246–266 (LFLILPIFWYILTEVWLASFL) traverse the membrane as a helical segment. Residue Arg-267 is a topological domain, intravirion. The helical transmembrane segment at 268-288 (HNFGFYCGMFIASIILILPLV) threads the bilayer. The Virion surface portion of the chain corresponds to 289–299 (RYEAVFVSAKL). A helical transmembrane segment spans residues 300–320 (HTTVAINVAIIPILCSVAMLI). Over 321–405 (RICRIFKSMR…TTDSEEEIFP (85 aa)) the chain is Intravirion. The interval 346-405 (LESEPRPRPSRTPSPGRNRRRSSTSSSSSRSTRRQRPVSTQALVSSVLPMTTDSEEEIFP) is disordered. Positions 386–397 (QALVSSVLPMTT) are enriched in polar residues.

This sequence belongs to the herpesviridae glycoprotein M family. Interacts (via N-terminus) with gN (via N-terminus). The gM-gN heterodimer forms the gCII complex.

The protein localises to the virion membrane. It localises to the host Golgi apparatus. The protein resides in the host trans-Golgi network. It is found in the host endosome membrane. Its subcellular location is the host nucleus inner membrane. Functionally, envelope glycoprotein important for virion assembly and egress. Plays a role in the correct incorporation of gH-gL into virion membrane. Directs the glycoprotein N (gN) to the host trans-Golgi network. The polypeptide is Envelope glycoprotein M (Epstein-Barr virus (strain B95-8) (HHV-4)).